Consider the following 712-residue polypeptide: MKSLIIAEKPSVGRDIANTLNINEKRNGYFENNKYIVTWALGHLVTNATPEQYDASYKEWKLNDLPIIPNKMKTIVISKTRKQFSTVQSLINNNKVKDIIIATDAGREGELVARLILDKAHNKKPTKRLWISSVTNKAIKEGFNKLQDGRKFNNLYHAALARSEADWIVGINATRALTTKYDAQLSLGRVQTPTIQLVQMRQNEINHFKPQTYYTMKLNAAGLTFHCTKPQSHPDKTVLESIKKAIDGQSGHIASISKTHKKAYPQQLYNLTDLQQDAYKRFHLGPKETLNTLQTLYERHKLVTYPRTDSNYLTDDMVDTLKDRLKAIMATSLKDMAKAQMSQTFSSKQRFVNNNKVSDHHAIIPTEVRPDINQLSQRESKIYMMIAQRYLENLMPPHEYEAIAIELKVGQHTFTFKDKVTTKLGFKAIYENKESINTQIDQLQKGTKLNVTKILIEEHETTAPPYFNEGSLLKAMESPQKFFDLSDKKHDKTLKDTGGIGTVATRADIIEKLFNMNAIEARDGKIKVTSKGKQILELAPQKLTSPLLTAEWEEKLLLIEQGKYNASQFISEMKAFTNQVVNEIKESEQNYKHDNLTTTECPTCGKFMIKVKTKNGQMLVCQDPQCKTKKNVQRKTNARCPNCHKKMTLFGRGKDAVYRCVCGHTETQAQMDKRHKNKKSDKVNKKDLKKYMNNDEGIENNPFQDALKGLKF.

A Toprim domain is found at 2–135; it reads KSLIIAEKPS…TKRLWISSVT (134 aa). Residues Glu-8 and Asp-104 each coordinate Mg(2+). The region spanning 152–581 is the Topo IA-type catalytic domain; the sequence is FNNLYHAALA…EMKAFTNQVV (430 aa). An interaction with DNA region spans residues 186–191; the sequence is SLGRVQ. The active-site O-(5'-phospho-DNA)-tyrosine intermediate is the Tyr-305.

Belongs to the type IA topoisomerase family. It depends on Mg(2+) as a cofactor.

The catalysed reaction is ATP-independent breakage of single-stranded DNA, followed by passage and rejoining.. Functionally, releases the supercoiling and torsional tension of DNA, which is introduced during the DNA replication and transcription, by transiently cleaving and rejoining one strand of the DNA duplex. Introduces a single-strand break via transesterification at a target site in duplex DNA. The scissile phosphodiester is attacked by the catalytic tyrosine of the enzyme, resulting in the formation of a DNA-(5'-phosphotyrosyl)-enzyme intermediate and the expulsion of a 3'-OH DNA strand. The free DNA strand then undergoes passage around the unbroken strand, thus removing DNA supercoils. Finally, in the religation step, the DNA 3'-OH attacks the covalent intermediate to expel the active-site tyrosine and restore the DNA phosphodiester backbone. In Staphylococcus saprophyticus subsp. saprophyticus (strain ATCC 15305 / DSM 20229 / NCIMB 8711 / NCTC 7292 / S-41), this protein is DNA topoisomerase 3.